The sequence spans 128 residues: Saitohin (128 aa).

Positions 77–128 (SYSSEESSRNGAEQGRQLSIEGPFQGQNCPSHPAAALPLPMRGESQATSCQV) are disordered.

In terms of assembly, interacts with PRDX6. As to expression, highest expression in placenta, muscle, fetal brain, and adult brain, with lower expression in heart, kidney, stomach, testis, and adrenal gland. In the central nervous system, highest expression is in temporal lobe, hypothalamus, medulla and spinal cord, with lower expression in other brain regions.

It is found in the cytoplasm. Its subcellular location is the nucleus. In Homo sapiens (Human), this protein is Saitohin (STH).